The sequence spans 406 residues: Transcriptional activator NprA (406 aa).

TPR repeat units follow at residues 125 to 158 (YYYY…FRSQ), 206 to 239 (AECH…AQII), 246 to 279 (GTIE…KRNS), and 285 to 318 (FITL…LKRE).

Functionally, activates the transcription of nprS by about five fold. May bind to the upstream region of nprS promoter. The protein is Transcriptional activator NprA (nprA) of Geobacillus stearothermophilus (Bacillus stearothermophilus).